Here is a 172-residue protein sequence, read N- to C-terminus: Adenine phosphoribosyltransferase (172 aa).

It belongs to the purine/pyrimidine phosphoribosyltransferase family. As to quaternary structure, homodimer.

The protein localises to the cytoplasm. The enzyme catalyses AMP + diphosphate = 5-phospho-alpha-D-ribose 1-diphosphate + adenine. It functions in the pathway purine metabolism; AMP biosynthesis via salvage pathway; AMP from adenine: step 1/1. Its function is as follows. Catalyzes a salvage reaction resulting in the formation of AMP, that is energically less costly than de novo synthesis. The polypeptide is Adenine phosphoribosyltransferase (Staphylococcus aureus (strain bovine RF122 / ET3-1)).